The primary structure comprises 758 residues: MRYNQFSYIKTDGQVAKKELENLGFHFPISNKPKEIFRSFLNTYFFQSSDKDYQIASFIADFETDLLSFFNADKPLTKEIFDMVSLQLLGFIPGFDFENLKEFTSQIAFPVPFNENDLFASIHHLLGTRHKNGMLLIDDLISKGFLGPDNTYHFFNGKTLATFDTSQLIKEVVYVEAPIDSDNDGKSDLIKVMILRPRSQKQIPTVMTASPYHQGINEVANDKKLHSMQTDLPLKEAHKIHVADASISTLVCENADLPITENTEQFSYIDSYTLNDYFLSRGFANIYVSGVGTADSDGFMTSGDYVQIESFKAIIDWLNGRAKAFTSHKREAYVLANWSNGKVATTGKSYLGTMSNGLATTGVEGLEVIIAEAAISSWYDYYRENGLICSPGGYPGEDLDVLTELTYSRSLHAGDFLRQKEKYYQLLNQQSQAIDRDSGDYNQFWHDRNYLPNAKNVTCEVVFTHGLQDWNVKPRQVYNMFNALPGSVAKHLFLHHGQHVYMHNWQSIDFKECMNALLCQKLLGIASNFQLPAILWQNNQEEQKWQSLEEFGTSNTFRIPLGEGFAKISNQYSTETFERYSKDFKSFKRDLFSGKANQLSLEFPLDQDLQLNGEAILHLSLTSSVSKGLISAQLLDKGLKKRLGDTPTILDLKVMDNGQNFSREDLKELPMRESTERVISKGVLNLQNRDGLLEVQSVEADQWLSFDFKLQPSLYQLRKGDCLQVLLYTTDFEHTVRDNSDYELRINLEKSYLSLPIA.

Active-site charge relay system residues include Ser-349, Asp-469, and His-499.

The protein belongs to the peptidase S15 family. Homodimer.

The protein localises to the cytoplasm. The catalysed reaction is Hydrolyzes Xaa-Pro-|- bonds to release unblocked, N-terminal dipeptides from substrates including Ala-Pro-|-p-nitroanilide and (sequentially) Tyr-Pro-|-Phe-Pro-|-Gly-Pro-|-Ile.. Functionally, removes N-terminal dipeptides sequentially from polypeptides having unsubstituted N-termini provided that the penultimate residue is proline. This is Xaa-Pro dipeptidyl-peptidase from Streptococcus uberis (strain ATCC BAA-854 / 0140J).